The chain runs to 2335 residues: tRNA3(Ser)-specific nuclease WapA (2335 aa).

Positions 1-32 (MKKRKRRTFKRFIAAFLVLSLMISLLPADVLA) are cleaved as a signal peptide. The tract at residues 36–81 (EEEAGNRIVSDDPEETPRNEQTEEAVPFPSKDINKEGEITSERTEN) is disordered. Residues 67-81 (DINKEGEITSERTEN) are compositionally biased toward basic and acidic residues. YD repeat units follow at residues 1032–1065 (YNDK…ITGP), 1076–1103 (SDLL…LVKQ), 1678–1716 (YDKE…PLGN), 1898–1935 (YDAN…DGTV), and 2082–2113 (YNAH…PTKT). Composition is skewed to basic residues over residues 2251–2260 (KKDHGPKSKA) and 2269–2281 (SKFR…RRTT). Residues 2251–2285 (KKDHGPKSKARMPNGQPKSKFRSAKTLRRTTKATA) are disordered.

This sequence belongs to the RHS/WapA nuclease family.

The protein resides in the secreted. It localises to the cell wall. Toxic component of a toxin-immunity protein module, which functions as a cellular contact-dependent growth inhibition (CDI) system. A site-specific tRNA3(Ser) nuclease, the C-terminus (residues 2201-2335) probably removes 2 or 4 nucleotides from the 3' end of tRNA3(Ser) but not tRNA2(Arg) or tRNA(Glu) (upon expression in E.coli), possibly endonucleolytically. The nuclease activity is neutralized by expression of the cognate immunity protein WapI from the same strain, but not its homolog from 2 other B.subtilis strains. The C-terminus cannot be expressed on its own in E.coli, however it can be cloned in the presence of its cognate immunity protein gene wapI. Cell contact is probably necessary for growth inhibition. The polypeptide is tRNA3(Ser)-specific nuclease WapA (wapA) (Bacillus spizizenii (strain DSM 15029 / JCM 12233 / NBRC 101239 / NRRL B-23049 / TU-B-10) (Bacillus subtilis subsp. spizizenii)).